The following is a 322-amino-acid chain: MTTTAPHVPVLIDEVIAGLEPATGETHVDGTFGAGGYTRALLQAGARVYAFDRDPDAIAEGRALEDGQDGRLILVPERFSRMAEALNERGIDQVDGVTLDIGVSSMQLDRADRGFSFQADGPLDMRMEKSGMSAADFVNTADEAEIADVLHDLGEEPRARRVARAIVQARPITRTSELAEVVRRALGHKPHEKKDPATRTFQAIRIHLNAELDELEQGLAAAERVLRPGGRLAVVSFHSIEDRIVKRFLRDRSGATPAGSRHLPDARAGGPRPSFEAVAKPVRAGEAELARNPRSRSATLRVARRTAAAPWGTAPKKEGRQG.

S-adenosyl-L-methionine-binding positions include 35 to 37 (GGY), Asp52, Phe79, Asp100, and Gln107. A disordered region spans residues 254 to 322 (GATPAGSRHL…TAPKKEGRQG (69 aa)). Low complexity predominate over residues 295–309 (SRSATLRVARRTAAA).

It belongs to the methyltransferase superfamily. RsmH family.

Its subcellular location is the cytoplasm. It catalyses the reaction cytidine(1402) in 16S rRNA + S-adenosyl-L-methionine = N(4)-methylcytidine(1402) in 16S rRNA + S-adenosyl-L-homocysteine + H(+). Functionally, specifically methylates the N4 position of cytidine in position 1402 (C1402) of 16S rRNA. This Rhizorhabdus wittichii (strain DSM 6014 / CCUG 31198 / JCM 15750 / NBRC 105917 / EY 4224 / RW1) (Sphingomonas wittichii) protein is Ribosomal RNA small subunit methyltransferase H.